The following is a 308-amino-acid chain: MSPMAERLRSIIRDPGRIRRAEPLKRHTSVRIGGPADYLVEVADRHELSRLLRLAGEEALPVYILGSGSNLVVSDEGVRGLVLRLTGEFARIAVDGSTVRVGGGCSLPKLAHQASRRGLGGLEFACAIPGTVGAGLVMNAGAHGGDMAQVVAEATVIWGDGRMERLCPGEIGFAYRSTRLQGTSAIVAEVVMALRPADRAALEGAMRQHLNRRRATQPLQYPNAGSVFKNPPGDYAGRLIEQAGLKGERVGDAQVSEKHANFIVNLGQATARDVLTLMDRVRSTVERRFGVRLEAEVKIWGHNPWFPP.

Residues 31-197 (RIGGPADYLV…AEVVMALRPA (167 aa)) form the FAD-binding PCMH-type domain. Arginine 176 is a catalytic residue. The active-site Proton donor is serine 226. Residue glutamate 296 is part of the active site.

Belongs to the MurB family. The cofactor is FAD.

The protein resides in the cytoplasm. It carries out the reaction UDP-N-acetyl-alpha-D-muramate + NADP(+) = UDP-N-acetyl-3-O-(1-carboxyvinyl)-alpha-D-glucosamine + NADPH + H(+). The protein operates within cell wall biogenesis; peptidoglycan biosynthesis. Its function is as follows. Cell wall formation. In Symbiobacterium thermophilum (strain DSM 24528 / JCM 14929 / IAM 14863 / T), this protein is UDP-N-acetylenolpyruvoylglucosamine reductase 2.